Here is a 204-residue protein sequence, read N- to C-terminus: E2 ubiquitin-conjugating enzyme PEX4 (204 aa).

Positions 2–196 (SAEKRLLQEY…IEYYVGRYSI (195 aa)) constitute a UBC core domain. The active-site Glycyl thioester intermediate is the Cys-133.

It belongs to the ubiquitin-conjugating enzyme family.

It is found in the peroxisome membrane. It catalyses the reaction S-ubiquitinyl-[E1 ubiquitin-activating enzyme]-L-cysteine + [E2 ubiquitin-conjugating enzyme]-L-cysteine = [E1 ubiquitin-activating enzyme]-L-cysteine + S-ubiquitinyl-[E2 ubiquitin-conjugating enzyme]-L-cysteine.. It functions in the pathway protein modification; protein ubiquitination. In terms of biological role, E2 ubiquitin-conjugating enzyme involved in peroxisome biosynthesis. Acts late in peroxisomal matrix protein import, after matrix protein translocation. Required for both monoubiquitination and polyubiquitination of coreceptor PEX20. polyubiquitination of PEX20 at conserved lysine 'Lys-19' near the N-terminus leads to its and proteasomal degradation, whereas a monoubiquitination at the conserved cysteine 'Cys-8' is essential for its recycling. The protein is E2 ubiquitin-conjugating enzyme PEX4 of Komagataella phaffii (strain GS115 / ATCC 20864) (Yeast).